Here is a 61-residue protein sequence, read N- to C-terminus: Small ribosomal subunit protein uS14 (61 aa).

Zn(2+)-binding residues include Cys-24, Cys-27, Cys-40, and Cys-43.

The protein belongs to the universal ribosomal protein uS14 family. Zinc-binding uS14 subfamily. As to quaternary structure, part of the 30S ribosomal subunit. Contacts proteins S3 and S10. Zn(2+) is required as a cofactor.

Binds 16S rRNA, required for the assembly of 30S particles and may also be responsible for determining the conformation of the 16S rRNA at the A site. This chain is Small ribosomal subunit protein uS14, found in Thermodesulfovibrio yellowstonii (strain ATCC 51303 / DSM 11347 / YP87).